Here is a 339-residue protein sequence, read N- to C-terminus: RNA polymerase principal sigma factor HrdC (339 aa).

Residues 1–10 (MAPTARTPTA) show a composition bias toward low complexity. 2 disordered regions span residues 1-37 (MAPTARTPTARTRDDRRATTRTARLRTRIPEPDEEPD) and 71-101 (REELETADTGEPAPTPRRRRTLEETVHDGQE). Residues 91-101 (TLEETVHDGQE) are compositionally biased toward basic and acidic residues. Residues 130 to 143 (DVIQEGNLGLIRAV) carry the Polymerase core binding motif. The segment at residues 300–319 (LQQVAQHVGLTRERVRQLEK) is a DNA-binding region (H-T-H motif).

It belongs to the sigma-70 factor family. As to quaternary structure, interacts transiently with the RNA polymerase catalytic core.

Functionally, sigma factors are initiation factors that promote the attachment of RNA polymerase to specific initiation sites and are then released. The protein is RNA polymerase principal sigma factor HrdC (hrdC) of Streptomyces coelicolor (strain ATCC BAA-471 / A3(2) / M145).